We begin with the raw amino-acid sequence, 386 residues long: L-arabinitol 4-dehydrogenase (386 aa).

8 residues coordinate Zn(2+): Cys55, His80, Glu81, Cys110, Cys113, Cys116, Cys124, and Glu165. Residues 192-193, Asp213, Arg218, Ile293, and 317-319 each bind NAD(+); these read PI and QYR.

It belongs to the zinc-containing alcohol dehydrogenase family. Homotetramer. The cofactor is Zn(2+).

It catalyses the reaction L-arabinitol + NAD(+) = L-xylulose + NADH + H(+). Its pathway is carbohydrate degradation; L-arabinose degradation via L-arabinitol; D-xylulose 5-phosphate from L-arabinose (fungal route): step 2/5. In terms of biological role, catalyzes the NAD-dependent oxidation of L-arabinitol to L-xylulose in the fungal L-arabinose catabolic pathway. L-arabinose catabolism is important for using plant material as a carbon source. Not active with NADP as cosubstrate. The sequence is that of L-arabinitol 4-dehydrogenase (ladA) from Aspergillus niger (strain ATCC MYA-4892 / CBS 513.88 / FGSC A1513).